Here is a 156-residue protein sequence, read N- to C-terminus: ATP synthase subunit b (156 aa).

A helical transmembrane segment spans residues 1–21 (MSINATLLIQIIAFVLLIWFV).

Belongs to the ATPase B chain family. As to quaternary structure, F-type ATPases have 2 components, F(1) - the catalytic core - and F(0) - the membrane proton channel. F(1) has five subunits: alpha(3), beta(3), gamma(1), delta(1), epsilon(1). F(0) has three main subunits: a(1), b(2) and c(10-14). The alpha and beta chains form an alternating ring which encloses part of the gamma chain. F(1) is attached to F(0) by a central stalk formed by the gamma and epsilon chains, while a peripheral stalk is formed by the delta and b chains.

It is found in the cell inner membrane. Functionally, f(1)F(0) ATP synthase produces ATP from ADP in the presence of a proton or sodium gradient. F-type ATPases consist of two structural domains, F(1) containing the extramembraneous catalytic core and F(0) containing the membrane proton channel, linked together by a central stalk and a peripheral stalk. During catalysis, ATP synthesis in the catalytic domain of F(1) is coupled via a rotary mechanism of the central stalk subunits to proton translocation. Component of the F(0) channel, it forms part of the peripheral stalk, linking F(1) to F(0). This is ATP synthase subunit b from Hydrogenovibrio crunogenus (strain DSM 25203 / XCL-2) (Thiomicrospira crunogena).